A 350-amino-acid chain; its full sequence is Anthranilate phosphoribosyltransferase (350 aa).

Residues Gly-94, 97-98, Thr-102, 104-107, 122-130, and Ser-134 each bind 5-phospho-alpha-D-ribose 1-diphosphate; these read GS, NVST, and KHGNRSVSS. Gly-94 is a binding site for anthranilate. Ser-106 contacts Mg(2+). Position 125 (Asn-125) interacts with anthranilate. Arg-180 serves as a coordination point for anthranilate. The Mg(2+) site is built by Asp-239 and Glu-240.

Belongs to the anthranilate phosphoribosyltransferase family. Homodimer. It depends on Mg(2+) as a cofactor.

It carries out the reaction N-(5-phospho-beta-D-ribosyl)anthranilate + diphosphate = 5-phospho-alpha-D-ribose 1-diphosphate + anthranilate. It participates in amino-acid biosynthesis; L-tryptophan biosynthesis; L-tryptophan from chorismate: step 2/5. In terms of biological role, catalyzes the transfer of the phosphoribosyl group of 5-phosphorylribose-1-pyrophosphate (PRPP) to anthranilate to yield N-(5'-phosphoribosyl)-anthranilate (PRA). The polypeptide is Anthranilate phosphoribosyltransferase (Geotalea uraniireducens (strain Rf4) (Geobacter uraniireducens)).